Here is a 588-residue protein sequence, read N- to C-terminus: Synaptotagmin-3 (588 aa).

At 1–54 (MSGDYEDDLCRRALILVSDLCARIRDADTNDRCQEFNELRIRGYPRGPDADISV) the chain is on the vesicular side. Residues 10–34 (CRRALILVSDLCARIRDADTNDRCQ) form a cysteine motif region. The helical transmembrane segment at 55–75 (SLLSVIVTFCGIVLLGVSLFV) threads the bilayer. Residues 76–588 (SWKLCWVPWR…KGLSEKENSE (513 aa)) lie on the Cytoplasmic side of the membrane. 3 disordered regions span residues 129–161 (GGPH…PEPS), 183–222 (PSQT…VTSL), and 238–257 (QTLT…ALPL). A compositionally biased stretch (low complexity) spans 183 to 205 (PSQTSPELPSEGGTGSGLLLLPP). Residues 213-222 (AQSHQQVTSL) are compositionally biased toward polar residues. At R286 the chain carries Omega-N-methylarginine. C2 domains follow at residues 297-418 (PCGR…PLWR) and 429-563 (DLGE…EHWH). Ca(2+) contacts are provided by D328, D334, D386, F387, D388, S391, D394, D460, D466, D520, and D522.

The protein belongs to the synaptotagmin family. Homodimer; disulfide-linked via the cysteine motif. Can also form heterodimers with SYT6, SYT9 and SYT10. Ca(2+) serves as cofactor. Brain, various endocrine tissues and hormone-secreting clonal cells.

The protein localises to the cell membrane. Its subcellular location is the cytoplasmic vesicle. The protein resides in the secretory vesicle membrane. In terms of biological role, ca(2+) sensor involved in Ca(2+)-dependent exocytosis of secretory vesicles through Ca(2+) and phospholipid binding to the C2 domain. Ca(2+) induces binding of the C2-domains to phospholipid membranes and to assembled SNARE-complexes; both actions contribute to triggering exocytosis. Plays a role in dendrite formation by melanocytes. In Rattus norvegicus (Rat), this protein is Synaptotagmin-3 (Syt3).